The sequence spans 415 residues: Squalene synthase 10 (415 aa).

The next 2 helical transmembrane spans lie at 281–301 and 392–412; these read AIFR…ALCF and LIVI…SNLP.

The protein belongs to the phytoene/squalene synthase family. Mg(2+) is required as a cofactor. It depends on Mn(2+) as a cofactor.

It is found in the endoplasmic reticulum membrane. It carries out the reaction 2 (2E,6E)-farnesyl diphosphate + NADH + H(+) = squalene + 2 diphosphate + NAD(+). The enzyme catalyses 2 (2E,6E)-farnesyl diphosphate + NADPH + H(+) = squalene + 2 diphosphate + NADP(+). It participates in terpene metabolism; lanosterol biosynthesis; lanosterol from farnesyl diphosphate: step 1/3. In terms of biological role, component of the triterpene saponins (e.g. ginsenosides or panaxosides) and phytosterols biosynthetic pathways. Catalyzes the biosynthesis of squalene. The polypeptide is Squalene synthase 10 (Panax ginseng (Korean ginseng)).